Here is a 67-residue protein sequence, read N- to C-terminus: MSVISNPSKYKQSNTNKHMLEFLYSFFLCIPKLPNGSGTLCSSTRTISESNTIDVAFLNAFGMYSLR.

This is an uncharacterized protein from Vaccinia virus (strain Copenhagen) (VACV).